The following is a 510-amino-acid chain: JmjC domain-containing histone demethylation protein 1 (510 aa).

Residues 2–53 form a PHD-type zinc finger; that stretch reads PNRCDFCTSSSTKDKQQWTQCDGCDRWVHDVCVSITDPVSYAKYHCPTCTKT. The JmjC domain occupies 216–365; it reads TLVRELDLVD…TQIDIAGIEV (150 aa). Threonine 255 provides a ligand contact to substrate. Histidine 258 and aspartate 260 together coordinate Fe cation. Lysine 275 is a binding site for substrate. Histidine 333 is a Fe cation binding site. Residues 475 to 510 form a disordered region; it reads KGESKEKHKIESQLPEEKILQGSKLESKEEVQTENF. Positions 477-510 are enriched in basic and acidic residues; sequence ESKEKHKIESQLPEEKILQGSKLESKEEVQTENF.

It belongs to the JHDM1 histone demethylase family. Requires Fe(2+) as cofactor.

The protein resides in the nucleus. It carries out the reaction N(6),N(6)-dimethyl-L-lysyl(36)-[histone H3] + 2 2-oxoglutarate + 2 O2 = L-lysyl(36)-[histone H3] + 2 formaldehyde + 2 succinate + 2 CO2. Its function is as follows. Histone demethylase that specifically demethylates 'Lys-36' of histone H3, thereby playing a central role in histone code. The protein is JmjC domain-containing histone demethylation protein 1 (JHD1) of Yarrowia lipolytica (strain CLIB 122 / E 150) (Yeast).